The following is a 230-amino-acid chain: Cyclin-dependent kinase inhibitor rum1 (230 aa).

Disordered regions lie at residues 1-25 (MEPS…SFKG), 43-118 (PESD…DGLY), and 188-230 (SRVP…NLLR). A Phosphothreonine; by MAPK modification is found at threonine 13. Position 19 is a phosphoserine; by MAPK (serine 19). 2 positions are modified to phosphothreonine; by cdc2: threonine 58 and threonine 62. The interval 67–147 (LLPNLMLQDR…TFKPKLLFAD (81 aa)) is CDK inhibitory and cyclin-binding. A compositionally biased stretch (basic and acidic residues) spans 78–91 (NSLERCMEEDREHN). Over residues 93–102 (FLSSSDNQLL) the composition is skewed to polar residues. The interval 101 to 230 (LLSRKKRKPT…KDENRHNLLR (130 aa)) is required for activity as a cdc2 kinase inhibitor. A compositionally biased stretch (low complexity) spans 188-199 (SRVPSSSSGSFV). Residues 219–230 (NTKDENRHNLLR) are compositionally biased toward basic and acidic residues.

As to quaternary structure, interacts with cdc13, cig2 and pop1. Post-translationally, phosphorylated by cig1-associated cdc2 which leads to increased stability. Phosphorylation by MAPK reduces cdc2 kinase inhibitor ability.

Its subcellular location is the nucleus. Functionally, regulator of cell cycle G1 phase progression. Ensures the correct sequence of S phase and mitosis in the cell by acting as an inhibitor of the cdc2 mitotic kinase. Probably interacts with cdc2 to inhibit its action until the cell mass for Start is reached. Determines the length of the pre-Start G1 period and prevents mitosis from happening in early G1 cells. Required for maintaining pheromone-induced G1 arrest. Acts as an adapter protein since interaction with cdc13 promotes cyclin proteolysis during G1. Becomes a target for degradation at the G1/S phase transition, following phosphorylation by cig1-associated cdc2 at the G1/S phase transition. The chain is Cyclin-dependent kinase inhibitor rum1 (rum1) from Schizosaccharomyces pombe (strain 972 / ATCC 24843) (Fission yeast).